The sequence spans 159 residues: Peripheral myelin protein 22 (159 aa).

Position 1 (methionine 1) is a topological domain, cytoplasmic. The helical transmembrane segment at 2-31 (LLLLLGIIVLHVAVLVLLFVATIVSQWIVG) threads the bilayer. Residues 32–64 (NGHATDLWQNCSTTSGNVQHCLSSSANEWLQSV) are Extracellular-facing. Residue asparagine 41 is glycosylated (N-linked (GlcNAc...) asparagine). A helical membrane pass occupies residues 65–91 (QATMILSIIFSVLSLFLFFCQLFTLTK). At 92–95 (GGRF) the chain is on the cytoplasmic side. Residues 96-119 (YITGIFQILAGLCVMSAASIYTVR) traverse the membrane as a helical segment. The Extracellular portion of the chain corresponds to 120–133 (HPEWHLDSAYSYGF). A helical transmembrane segment spans residues 134 to 156 (AYILAWVAFPLALLSGVVYVILR). Topologically, residues 157-159 (KRE) are cytoplasmic.

The protein belongs to the PMP-22/EMP/MP20 family. Post-translationally, ubiquitinated by the DCX(DCAF13) E3 ubiquitin ligase complex, leading to its degradation.

The protein localises to the cell membrane. In terms of biological role, might be involved in growth regulation, and in myelinization in the peripheral nervous system. The sequence is that of Peripheral myelin protein 22 (PMP22) from Equus caballus (Horse).